Reading from the N-terminus, the 350-residue chain is Solute carrier family 35 member E4 (350 aa).

Low complexity predominate over residues 19–30; it reads GAAAGGAQAAGP. Residues 19–42 are disordered; sequence GAAAGGAQAAGPPEWPPGSPQALR. Helical transmembrane passes span 51–71, 73–93, 110–132, 135–155, 218–238, 258–278, 279–299, and 312–332; these read MAAL…KWIF, VHGF…AALA, VLLL…RAVP, LAQL…ALLL, VTLL…AALV, ILLS…LLAL, TSAL…LILS, and YVGI…EFVA. Residues 125–179 form the EamA domain; sequence NVGLRAVPLDLAQLVTTTTPLFTLALSALLLGRRHHPLQLAAMGPLCLGAACSLA.

The protein belongs to the TPT transporter family. SLC35E subfamily.

It localises to the membrane. Its function is as follows. Putative transporter. This chain is Solute carrier family 35 member E4 (SLC35E4), found in Homo sapiens (Human).